The primary structure comprises 851 residues: Glycogen phosphorylase, liver form (851 aa).

Residue Ala2 is modified to N-acetylalanine. The residue at position 15 (Ser15) is a Phosphoserine; by PHK; in form phosphorylase a. AMP is bound by residues 43–45 (DRN), Tyr76, and Arg310. Lys364 bears the N6-succinyllysine mark. An N6-acetyllysine modification is found at Lys470. Residues Ser524, Ser561, and Ser639 each carry the phosphoserine modification. Residue Lys681 is modified to N6-(pyridoxal phosphate)lysine. N6-acetyllysine is present on Lys796.

This sequence belongs to the glycogen phosphorylase family. As to quaternary structure, homodimer; enzymatically active. Interacts with PPP1R3B; recruits the phosphatase PP1 which dephosphorylates and inactivates PYGL/glycogen phosphorylase. Pyridoxal 5'-phosphate serves as cofactor. Post-translationally, acetylation, which is up-regulated by glucose and insulin and down-regulated by glucagon, inhibits the glycogen phosphorylase activity by promoting PPP1R3B-mediated recruitment of phosphatase PP1 and Ser-15 dephosphorylation. In terms of processing, phosphorylation at Ser-15 converts inactive phosphorylase b into active phosphorylase a. Dephosphorylation of Ser-15 by phosphatase PP1 inactivates the enzyme.

The protein localises to the cytoplasm. The protein resides in the cytosol. It carries out the reaction [(1-&gt;4)-alpha-D-glucosyl](n) + phosphate = [(1-&gt;4)-alpha-D-glucosyl](n-1) + alpha-D-glucose 1-phosphate. Allosterically regulated through the non-covalent binding of metabolites, being activated by AMP and inhibited by ATP, ADP, and glucose-6-phosphate. The activity is also controlled by post-translational modifications including phosphorylation and acetylation. Functionally, allosteric enzyme that catalyzes the rate-limiting step in glycogen catabolism, the phosphorolytic cleavage of glycogen to produce glucose-1-phosphate, and plays a central role in maintaining cellular and organismal glucose homeostasis. The protein is Glycogen phosphorylase, liver form of Ovis aries (Sheep).